A 72-amino-acid polypeptide reads, in one-letter code: Candidate secreted effector protein MPL124499 (72 aa).

The first 21 residues, Met1–Gly21, serve as a signal peptide directing secretion.

This sequence belongs to the CPGH1 family.

The protein localises to the secreted. The protein resides in the host cell. It is found in the host cytoplasm. It localises to the host nucleus. Rust effector delivered into infected tissues to modulate host functions and contribute to pathogen virulence. Enhances leaf colonization by the bacteria Pseudomonas syringae and the oomycete Hyaloperonospora arabidopsidis pathogens in an Arabidopsis thaliana infection model. This Melampsora larici-populina (strain 98AG31 / pathotype 3-4-7) (Poplar leaf rust fungus) protein is Candidate secreted effector protein MPL124499.